We begin with the raw amino-acid sequence, 849 residues long: DNA mismatch repair protein MutS (849 aa).

Position 665-672 (665-672) interacts with ATP; the sequence is GPNMAGKS.

This sequence belongs to the DNA mismatch repair MutS family.

Its function is as follows. This protein is involved in the repair of mismatches in DNA. It is possible that it carries out the mismatch recognition step. This protein has a weak ATPase activity. The chain is DNA mismatch repair protein MutS from Wolbachia pipientis wMel.